A 177-amino-acid polypeptide reads, in one-letter code: MTDHSAARDAVTRLTRWADDFPQPGVRFADLTPVFSDADGFRVVVDALAACAPATEVIAAVDARGFLLGGGVARELGSGVVAVRKSGKLPPPVLSQSYTLEYGTATLEIPAGSIGLDGRSVLVVDDVLATGGTLDATARLVESAGARVIGIAVVLEIAALGGRERLGKYPLTSLVTV.

This sequence belongs to the purine/pyrimidine phosphoribosyltransferase family. Homodimer.

It localises to the cytoplasm. It carries out the reaction AMP + diphosphate = 5-phospho-alpha-D-ribose 1-diphosphate + adenine. It functions in the pathway purine metabolism; AMP biosynthesis via salvage pathway; AMP from adenine: step 1/1. Functionally, catalyzes a salvage reaction resulting in the formation of AMP, that is energically less costly than de novo synthesis. The sequence is that of Adenine phosphoribosyltransferase from Rhodococcus opacus (strain B4).